Here is a 435-residue protein sequence, read N- to C-terminus: Probable tRNA pseudouridine synthase D (435 aa).

The active-site Nucleophile is the Asp-95. The TRUD domain occupies 170-396; it reads GVPNYFGTQR…SSGTRRAVLV (227 aa).

It belongs to the pseudouridine synthase TruD family.

The enzyme catalyses uridine(13) in tRNA = pseudouridine(13) in tRNA. Could be responsible for synthesis of pseudouridine from uracil-13 in transfer RNAs. The protein is Probable tRNA pseudouridine synthase D of Natronomonas pharaonis (strain ATCC 35678 / DSM 2160 / CIP 103997 / JCM 8858 / NBRC 14720 / NCIMB 2260 / Gabara) (Halobacterium pharaonis).